A 96-amino-acid polypeptide reads, in one-letter code: Acylphosphatase (96 aa).

Residues 4–91 form the Acylphosphatase-like domain; it reads RVHVYVKGKV…GEFDDFRILY (88 aa). Active-site residues include R19 and N37.

It belongs to the acylphosphatase family.

The catalysed reaction is an acyl phosphate + H2O = a carboxylate + phosphate + H(+). This Syntrophus aciditrophicus (strain SB) protein is Acylphosphatase (acyP).